Reading from the N-terminus, the 190-residue chain is RING finger protein 227 (190 aa).

The RING-type zinc-finger motif lies at 18–81 (CNICYRPFNL…RRVVTCPFCR (64 aa)). The segment at 111 to 145 (KCERDEAGNPAKESSDADGEAEEEGESEKGAGPRS) is disordered. Acidic residues predominate over residues 126–136 (DADGEAEEEGE).

The polypeptide is RING finger protein 227 (Homo sapiens (Human)).